A 176-amino-acid chain; its full sequence is Crossover junction endodeoxyribonuclease RuvC (176 aa).

Active-site residues include Asp-9, Glu-69, and Asp-141. 3 residues coordinate Mg(2+): Asp-9, Glu-69, and Asp-141.

The protein belongs to the RuvC family. Homodimer which binds Holliday junction (HJ) DNA. The HJ becomes 2-fold symmetrical on binding to RuvC with unstacked arms; it has a different conformation from HJ DNA in complex with RuvA. In the full resolvosome a probable DNA-RuvA(4)-RuvB(12)-RuvC(2) complex forms which resolves the HJ. Mg(2+) serves as cofactor.

Its subcellular location is the cytoplasm. The enzyme catalyses Endonucleolytic cleavage at a junction such as a reciprocal single-stranded crossover between two homologous DNA duplexes (Holliday junction).. Functionally, the RuvA-RuvB-RuvC complex processes Holliday junction (HJ) DNA during genetic recombination and DNA repair. Endonuclease that resolves HJ intermediates. Cleaves cruciform DNA by making single-stranded nicks across the HJ at symmetrical positions within the homologous arms, yielding a 5'-phosphate and a 3'-hydroxyl group; requires a central core of homology in the junction. The consensus cleavage sequence is 5'-(A/T)TT(C/G)-3'. Cleavage occurs on the 3'-side of the TT dinucleotide at the point of strand exchange. HJ branch migration catalyzed by RuvA-RuvB allows RuvC to scan DNA until it finds its consensus sequence, where it cleaves and resolves the cruciform DNA. This is Crossover junction endodeoxyribonuclease RuvC from Chromobacterium violaceum (strain ATCC 12472 / DSM 30191 / JCM 1249 / CCUG 213 / NBRC 12614 / NCIMB 9131 / NCTC 9757 / MK).